Consider the following 157-residue polypeptide: Protein Smg homolog (157 aa).

Belongs to the Smg family.

The sequence is that of Protein Smg homolog from Aliivibrio fischeri (strain MJ11) (Vibrio fischeri).